A 413-amino-acid polypeptide reads, in one-letter code: F-box/kelch-repeat protein At5g26960 (413 aa).

Positions 41–90 (SATIASLPDDLLLECISRVPSSSIPSLAVVCRRWSRLLHSPYFLHLRRRL) constitute an F-box domain. Kelch repeat units lie at residues 96 to 141 (SLFA…YGSL), 152 to 191 (RVYVVSRNAVLRYDSWMGTLNLRSPMIFPRKKFAIAVVSG), 192 to 238 (KIYV…AVDG), 240 to 295 (FYVI…AAVG), and 367 to 413 (LLRR…CVEW).

The chain is F-box/kelch-repeat protein At5g26960 from Arabidopsis thaliana (Mouse-ear cress).